A 313-amino-acid chain; its full sequence is MKSHQFSTALCQNTTESNGQPLRFPSPAKLNLFLYINGKFPNGYHELQTLFQFLDFGDWLDISIREQDNQIVLTPEIPNLKTENNLIYRAAKLLQEKANIQLGANIHLDKILPMGGGVGGGSSNAATALVSLNYLWQANLSIDELAKLGLTLGADVPIFVHGHAAFAEGVGEKITYCEPAEKWFVILKPDDSISTAVIFQDPNLPRNTPKKSLAQLLSEPYKNDCEKVVINHYSNVEKALNWLLQYAPARLTGTGACVFAEFDHEAEAQAVFRQKPEAFFGFVAKGLNVSPLHAMLKQLSSTHTHRQSKPEVL.

Lys-29 is a catalytic residue. 113-123 (PMGGGVGGGSS) contributes to the ATP binding site. Asp-155 is a catalytic residue.

Belongs to the GHMP kinase family. IspE subfamily.

The enzyme catalyses 4-CDP-2-C-methyl-D-erythritol + ATP = 4-CDP-2-C-methyl-D-erythritol 2-phosphate + ADP + H(+). It functions in the pathway isoprenoid biosynthesis; isopentenyl diphosphate biosynthesis via DXP pathway; isopentenyl diphosphate from 1-deoxy-D-xylulose 5-phosphate: step 3/6. Catalyzes the phosphorylation of the position 2 hydroxy group of 4-diphosphocytidyl-2C-methyl-D-erythritol. This chain is 4-diphosphocytidyl-2-C-methyl-D-erythritol kinase, found in Haemophilus influenzae (strain ATCC 51907 / DSM 11121 / KW20 / Rd).